The sequence spans 588 residues: Complement component C8 beta chain (588 aa).

Residues 1 to 30 (MFRVAIPRSALNLHSCLLHVTLSLVLISKA) form the signal peptide. The propeptide occupies 31 to 46 (AITTAGNEDSDVREAR). A TSP type-1 1 domain is found at 58–113 (DCVISDWSAWSRCDTCQKKRYRYAKLDQPSQFGGEPCHFHDMEDEACDVPDRYTCD). 7 disulfide bridges follow: Cys-59/Cys-94, Cys-70/Cys-104, Cys-73/Cys-112, Cys-118/Cys-129, Cys-123/Cys-142, Cys-136/Cys-151, and Cys-158/Cys-196. C-linked (Man) tryptophan glycosylation is found at Trp-64 and Trp-67. Residues 115–152 (IPLCEGFLCTQTGRCIHRTLQCNGEDDCGDMSDEVGCK) form the LDL-receptor class A domain. Residues Leu-134, Asn-137, Glu-139, Asp-141, Asp-147, and Glu-148 each contribute to the Ca(2+) site. In terms of domain architecture, MACPF spans 154–500 (VPKPCRQEAE…EYLAESSSCR (347 aa)). 4 beta stranded membrane passes run 248–255 (TIVSIGFA), 258–265 (GIAEFGFN), 375–382 (TQAGLKIG), and 388–395 (VYVSAGIE). Intrachain disulfides connect Cys-374–Cys-399, Cys-499–Cys-547, Cys-501–Cys-517, Cys-504–Cys-519, and Cys-521–Cys-530. Residues 501–531 (CAPCHNNGVAVLRGTRCDCVCPTGYTGRGCE) form the EGF-like domain. In terms of domain architecture, TSP type-1 2 spans 542–588 (DGSWSCWGAWSSCSGRKMSRSRQCNNPVPSDGGLACRGLQQESTDCF). Trp-548 and Trp-551 each carry a C-linked (Man) tryptophan glycan. Cysteines 554 and 587 form a disulfide.

Belongs to the complement C6/C7/C8/C9 family. Heterotrimer of 3 chains: alpha (C8A), beta (C8B) and gamma (C8G); the alpha and gamma chains are disulfide bonded. Component of the membrane attack complex (MAC), composed of complement C5b, C6, C7, C8A, C8B, C8G and multiple copies of the pore-forming subunit C9.

It localises to the secreted. It is found in the target cell membrane. In terms of biological role, component of the membrane attack complex (MAC), a multiprotein complex activated by the complement cascade, which inserts into a target cell membrane and forms a pore, leading to target cell membrane rupture and cell lysis. The MAC is initiated by proteolytic cleavage of C5 into complement C5b in response to the classical, alternative, lectin and GZMK complement pathways. The complement pathways consist in a cascade of proteins that leads to phagocytosis and breakdown of pathogens and signaling that strengthens the adaptive immune system. C8B, together with C8A and C8G, inserts into the target membrane, but does not form pores by itself. During MAC assembly, associates with C5b, C6 and C7 to form the C5b8 intermediate complex that inserts into the target membrane and traverses the bilayer increasing membrane rigidity. The sequence is that of Complement component C8 beta chain (c8b) from Paralichthys olivaceus (Bastard halibut).